The primary structure comprises 485 residues: N-succinylglutamate 5-semialdehyde dehydrogenase (485 aa).

Residue 220–225 (GSANTG) participates in NAD(+) binding. Active-site residues include E243 and C278.

Belongs to the aldehyde dehydrogenase family. AstD subfamily.

The catalysed reaction is N-succinyl-L-glutamate 5-semialdehyde + NAD(+) + H2O = N-succinyl-L-glutamate + NADH + 2 H(+). It functions in the pathway amino-acid degradation; L-arginine degradation via AST pathway; L-glutamate and succinate from L-arginine: step 4/5. Its function is as follows. Catalyzes the NAD-dependent reduction of succinylglutamate semialdehyde into succinylglutamate. This is N-succinylglutamate 5-semialdehyde dehydrogenase from Aliivibrio salmonicida (strain LFI1238) (Vibrio salmonicida (strain LFI1238)).